A 119-amino-acid polypeptide reads, in one-letter code: Fluoride-specific ion channel FluC (119 aa).

4 consecutive transmembrane segments (helical) span residues 5–25 (ILPLSIGAIFGTTARWLLNLA), 30–50 (LSPATGNLFANWTGALLIGIF), 59–79 (WKLLLITGFFGSLTTLSGFSL), and 92–112 (SALANIFLHTAGSLLLTWLGL). Residues glycine 69 and threonine 72 each contribute to the Na(+) site.

Belongs to the fluoride channel Fluc/FEX (TC 1.A.43) family.

Its subcellular location is the cell inner membrane. The enzyme catalyses fluoride(in) = fluoride(out). With respect to regulation, na(+) is not transported, but it plays an essential structural role and its presence is essential for fluoride channel function. Fluoride-specific ion channel. Important for reducing fluoride concentration in the cell, thus reducing its toxicity. This Neisseria gonorrhoeae (strain NCCP11945) protein is Fluoride-specific ion channel FluC.